Consider the following 485-residue polypeptide: Glutamyl-tRNA(Gln) amidotransferase subunit A (485 aa).

Active-site charge relay system residues include Lys79 and Ser154. Ser178 acts as the Acyl-ester intermediate in catalysis.

It belongs to the amidase family. GatA subfamily. As to quaternary structure, heterotrimer of A, B and C subunits.

It carries out the reaction L-glutamyl-tRNA(Gln) + L-glutamine + ATP + H2O = L-glutaminyl-tRNA(Gln) + L-glutamate + ADP + phosphate + H(+). Allows the formation of correctly charged Gln-tRNA(Gln) through the transamidation of misacylated Glu-tRNA(Gln) in organisms which lack glutaminyl-tRNA synthetase. The reaction takes place in the presence of glutamine and ATP through an activated gamma-phospho-Glu-tRNA(Gln). This Clostridium novyi (strain NT) protein is Glutamyl-tRNA(Gln) amidotransferase subunit A.